The chain runs to 608 residues: Formate hydrogenlyase subunit 3 (608 aa).

12 helical membrane passes run 10-26 (GVAW…LFSF), 44-67 (LYTA…LSLV), 76-93 (LNAI…FVSL), 116-140 (AAAV…MALC), 153-173 (LWFA…WLLW), 197-218 (IWLL…HGWV), 229-251 (AAAL…LSLL), 258-280 (WWGI…YALV), 296-312 (IGII…GIAL), 416-440 (LAVG…VTFL), 453-476 (CAPL…GVAA), and 502-521 (MITL…MAIC).

It belongs to the complex I subunit 4 family. FHL comprises of a formate dehydrogenase, unidentified electron carriers and a hydrogenase (isoenzyme 3). In this non-energy conserving pathway molecular hydrogen and carbodioxide from formate are released.

The protein resides in the cell inner membrane. The sequence is that of Formate hydrogenlyase subunit 3 (hycC) from Escherichia coli (strain K12).